A 363-amino-acid chain; its full sequence is MIAELEIIFYSQKGEGVGFYLNKPTYVKGVIKGEKIKAFIYLESASFFKARLVEILIESKNRNHDVPKLHYLIGGYELLHMNNTEQINFKKERVINDFKKIANYEISSLELVQGKKLLHYRNKITLHYGSLYLANSNHKIKLAKSLLTDINLKANKKEAEWIIRKLDTQIEGTKQTKIYTTDKMNGITFRVGLNSFYQVNKEVANLIYNQISEFINLNENVLDLYSGIGTISLLIAAKAKSVTGVERNLDSIEDANFNKEFNKIKNVNFIHQDVIKYLKQNKTYFDTVIVDPARRGLEEDIIELILKLKPQKIIYLSCNVGTQASNFNKFKHEYQIEFIKSYDMFPQTYHIESLMVLKKLNKQ.

Residues Gln-198, Tyr-225, Glu-246, and Asp-291 each coordinate S-adenosyl-L-methionine. Cys-318 serves as the catalytic Nucleophile.

Belongs to the class I-like SAM-binding methyltransferase superfamily. RNA M5U methyltransferase family.

This is an uncharacterized protein from Mycoplasma mobile (strain ATCC 43663 / 163K / NCTC 11711) (Mesomycoplasma mobile).